Here is a 251-residue protein sequence, read N- to C-terminus: Cell division protein ZapD (251 aa).

This sequence belongs to the ZapD family. As to quaternary structure, interacts with FtsZ.

The protein resides in the cytoplasm. Cell division factor that enhances FtsZ-ring assembly. Directly interacts with FtsZ and promotes bundling of FtsZ protofilaments, with a reduction in FtsZ GTPase activity. The sequence is that of Cell division protein ZapD from Burkholderia vietnamiensis (strain G4 / LMG 22486) (Burkholderia cepacia (strain R1808)).